The following is a 339-amino-acid chain: Casein kinase II subunit alpha' (339 aa).

Residues 50–334 (YEIINKIGRG…AKEAMDHKFF (285 aa)) enclose the Protein kinase domain. ATP is bound by residues 56–64 (IGRGKYSEV) and K79. D167 (proton acceptor) is an active-site residue.

Belongs to the protein kinase superfamily. Ser/Thr protein kinase family. CK2 subfamily. As to quaternary structure, tetramer composed of an alpha chain, an alpha', one beta chain and one beta' chain. Interacts with FACT subunits POB3 and SPT16. Interacts with NAP1. Interacts with YTA7.

The enzyme catalyses L-seryl-[protein] + ATP = O-phospho-L-seryl-[protein] + ADP + H(+). It carries out the reaction L-threonyl-[protein] + ATP = O-phospho-L-threonyl-[protein] + ADP + H(+). In terms of biological role, catalytic subunit of a constitutively active serine/threonine-protein kinase complex that phosphorylates a large number of substrates containing acidic residues C-terminal to the phosphorylated serine or threonine. Phosphorylates YTA7 during S-phase to promote transcription of histones. The polypeptide is Casein kinase II subunit alpha' (Saccharomyces cerevisiae (strain ATCC 204508 / S288c) (Baker's yeast)).